The sequence spans 199 residues: Fe/S biogenesis protein NfuA (199 aa).

[4Fe-4S] cluster is bound by residues Cys-151 and Cys-154.

This sequence belongs to the NfuA family. In terms of assembly, homodimer. It depends on [4Fe-4S] cluster as a cofactor.

Its function is as follows. Involved in iron-sulfur cluster biogenesis. Binds a 4Fe-4S cluster, can transfer this cluster to apoproteins, and thereby intervenes in the maturation of Fe/S proteins. Could also act as a scaffold/chaperone for damaged Fe/S proteins. This Xylella fastidiosa (strain M23) protein is Fe/S biogenesis protein NfuA.